The chain runs to 364 residues: tRNA 2-selenouridine synthase (364 aa).

In terms of domain architecture, Rhodanese spans 14-137 (LIADTPIIDV…LRQTAIQATI (124 aa)). The S-selanylcysteine intermediate role is filled by C97.

Belongs to the SelU family. As to quaternary structure, monomer.

It carries out the reaction 5-methylaminomethyl-2-thiouridine(34) in tRNA + selenophosphate + (2E)-geranyl diphosphate + H2O + H(+) = 5-methylaminomethyl-2-selenouridine(34) in tRNA + (2E)-thiogeraniol + phosphate + diphosphate. It catalyses the reaction 5-methylaminomethyl-2-thiouridine(34) in tRNA + (2E)-geranyl diphosphate = 5-methylaminomethyl-S-(2E)-geranyl-thiouridine(34) in tRNA + diphosphate. The catalysed reaction is 5-methylaminomethyl-S-(2E)-geranyl-thiouridine(34) in tRNA + selenophosphate + H(+) = 5-methylaminomethyl-2-(Se-phospho)selenouridine(34) in tRNA + (2E)-thiogeraniol. The enzyme catalyses 5-methylaminomethyl-2-(Se-phospho)selenouridine(34) in tRNA + H2O = 5-methylaminomethyl-2-selenouridine(34) in tRNA + phosphate. Involved in the post-transcriptional modification of the uridine at the wobble position (U34) of tRNA(Lys), tRNA(Glu) and tRNA(Gln). Catalyzes the conversion of 2-thiouridine (S2U-RNA) to 2-selenouridine (Se2U-RNA). Acts in a two-step process involving geranylation of 2-thiouridine (S2U) to S-geranyl-2-thiouridine (geS2U) and subsequent selenation of the latter derivative to 2-selenouridine (Se2U) in the tRNA chain. The chain is tRNA 2-selenouridine synthase from Escherichia coli O45:K1 (strain S88 / ExPEC).